A 118-amino-acid polypeptide reads, in one-letter code: Large ribosomal subunit protein bL19 (118 aa).

The protein belongs to the bacterial ribosomal protein bL19 family.

This protein is located at the 30S-50S ribosomal subunit interface and may play a role in the structure and function of the aminoacyl-tRNA binding site. This is Large ribosomal subunit protein bL19 from Campylobacter jejuni subsp. jejuni serotype O:6 (strain 81116 / NCTC 11828).